Reading from the N-terminus, the 166-residue chain is Ribosome biogenesis regulatory protein homolog (166 aa).

Phosphoserine occurs at positions 34 and 64. Residues K144 to H166 form a disordered region. The span at T156–H166 shows a compositional bias: basic residues.

The protein belongs to the RRS1 family. Component of a hexameric 5S RNP precursor complex, composed of 5S RNA, rrs1, rpf2, rpl5a/rpl5b, rpl11a/rpl11b and syo1; this complex acts as a precursor for ribosome assembly. Interacts with sad1.

Its subcellular location is the nucleus. It localises to the nucleolus. Functionally, involved in ribosomal large subunit assembly. This is Ribosome biogenesis regulatory protein homolog from Schizosaccharomyces pombe (strain 972 / ATCC 24843) (Fission yeast).